A 677-amino-acid chain; its full sequence is DNA ligase (677 aa).

Residues 34 to 38 (DLAFD), 83 to 84 (SL), and E115 each bind NAD(+). The active-site N6-AMP-lysine intermediate is the K117. NAD(+) is bound by residues R138, E180, K297, and K321. C416, C419, C434, and C439 together coordinate Zn(2+). The BRCT domain occupies 596–677 (KKTSQLAGLT…LIKMLETEQA (82 aa)).

It belongs to the NAD-dependent DNA ligase family. LigA subfamily. Mg(2+) serves as cofactor. Mn(2+) is required as a cofactor.

The enzyme catalyses NAD(+) + (deoxyribonucleotide)n-3'-hydroxyl + 5'-phospho-(deoxyribonucleotide)m = (deoxyribonucleotide)n+m + AMP + beta-nicotinamide D-nucleotide.. DNA ligase that catalyzes the formation of phosphodiester linkages between 5'-phosphoryl and 3'-hydroxyl groups in double-stranded DNA using NAD as a coenzyme and as the energy source for the reaction. It is essential for DNA replication and repair of damaged DNA. The polypeptide is DNA ligase (Acidobacterium capsulatum (strain ATCC 51196 / DSM 11244 / BCRC 80197 / JCM 7670 / NBRC 15755 / NCIMB 13165 / 161)).